Consider the following 247-residue polypeptide: MHKLVLIRHGESTWNLENRFTGWTDVDLTPTGIEQAKTAGRLLKAEGYEFDLAFTSVLKRATRTLWHVLDEMDRTWLPVEHSWRLNERHYGALQGLNKADMAKQYGDAQVLVWRRSYDTPPPALEAGDPRSERGDIRYAGLDPEQIPLTECLKDTVARVLPFWNERIAPAMRSGQRVMVAAHGNSIRALVKYLDGISDDDIVGLNIPNGIPLVYELDDDLKPLRHYYLGDAEAAAKAAAAVASQGKA.

Substrate-binding positions include 8-15, 21-22, R60, 87-90, K98, 114-115, and 183-184; these read RHGESTWN, TG, ERHY, RR, and GN. Catalysis depends on H9, which acts as the Tele-phosphohistidine intermediate. The active-site Proton donor/acceptor is the E87.

The protein belongs to the phosphoglycerate mutase family. BPG-dependent PGAM subfamily. As to quaternary structure, homodimer.

The enzyme catalyses (2R)-2-phosphoglycerate = (2R)-3-phosphoglycerate. The protein operates within carbohydrate degradation; glycolysis; pyruvate from D-glyceraldehyde 3-phosphate: step 3/5. Functionally, catalyzes the interconversion of 2-phosphoglycerate and 3-phosphoglycerate. This Paracidovorax citrulli (strain AAC00-1) (Acidovorax citrulli) protein is 2,3-bisphosphoglycerate-dependent phosphoglycerate mutase.